A 268-amino-acid polypeptide reads, in one-letter code: Activator of basal transcription 1 (268 aa).

Residues 6-38 are a coiled coil; sequence KLVEEQKAAMEEEKEVNAEAAEELEEAEEASCN. Positions 47-144 constitute an RRM domain; the sequence is GIVYLGHVPP…RKRSPFRYDL (98 aa). A coiled-coil region spans residues 163–193; that stretch reads AFERQVRRQRLRAEVAQAKRETDFYLRNVEQ. The segment at 200–242 is disordered; the sequence is ADGDATRPNSSWTFTQRPTEQELRAQKGARPGGRERARLATVQ. Positions 206 to 217 are enriched in polar residues; sequence RPNSSWTFTQRP.

Belongs to the ESF2/ABP1 family. In terms of assembly, interacts with IGHMBP2. Interacts with ESF1/ABTAP.

It localises to the nucleus. The protein resides in the nucleolus. In terms of biological role, may be a novel TATA-binding protein (TBP) which can function as a basal transcription activator. Can act as a regulator of basal transcription for class II genes. This Rattus norvegicus (Rat) protein is Activator of basal transcription 1 (Abt1).